Reading from the N-terminus, the 445-residue chain is Phosphoglucosamine mutase (445 aa).

Ser102 serves as the catalytic Phosphoserine intermediate. Positions 102, 241, 243, and 245 each coordinate Mg(2+). Ser102 is modified (phosphoserine).

Belongs to the phosphohexose mutase family. Mg(2+) serves as cofactor. In terms of processing, activated by phosphorylation.

It carries out the reaction alpha-D-glucosamine 1-phosphate = D-glucosamine 6-phosphate. Its function is as follows. Catalyzes the conversion of glucosamine-6-phosphate to glucosamine-1-phosphate. This Shigella boydii serotype 4 (strain Sb227) protein is Phosphoglucosamine mutase.